The following is a 247-amino-acid chain: Peptidyl-prolyl cis-trans isomerase FKBP17-2, chloroplastic (247 aa).

The transit peptide at 1-79 (MANLFTATAP…SSLTRRFGIG (79 aa)) directs the protein to the chloroplast. The disordered stretch occupies residues 26–64 (QCYASSSNPPEPESSSPPPPPPPPQPLASQQKRKKNVET). The segment covering 34-51 (PPEPESSSPPPPPPPPQP) has biased composition (pro residues). Residues 141–243 (GDLVVIDLKG…EYIVEIDRVS (103 aa)) form the PPIase FKBP-type domain.

The protein belongs to the FKBP-type PPIase family.

The protein resides in the plastid. It is found in the chloroplast thylakoid lumen. The catalysed reaction is [protein]-peptidylproline (omega=180) = [protein]-peptidylproline (omega=0). Its function is as follows. PPIases accelerate the folding of proteins. It catalyzes the cis-trans isomerization of proline imidic peptide bonds in oligopeptides. The polypeptide is Peptidyl-prolyl cis-trans isomerase FKBP17-2, chloroplastic (FKBP17-2) (Arabidopsis thaliana (Mouse-ear cress)).